The following is a 335-amino-acid chain: Acetyl-coenzyme A carboxylase carboxyl transferase subunit alpha (335 aa).

The CoA carboxyltransferase C-terminal domain occupies 48 to 308 (VLESKVDALR…KSLLVEELRM (261 aa)).

This sequence belongs to the AccA family. In terms of assembly, acetyl-CoA carboxylase is a heterohexamer composed of biotin carboxyl carrier protein (AccB), biotin carboxylase (AccC) and two subunits each of ACCase subunit alpha (AccA) and ACCase subunit beta (AccD).

The protein localises to the cytoplasm. It catalyses the reaction N(6)-carboxybiotinyl-L-lysyl-[protein] + acetyl-CoA = N(6)-biotinyl-L-lysyl-[protein] + malonyl-CoA. It functions in the pathway lipid metabolism; malonyl-CoA biosynthesis; malonyl-CoA from acetyl-CoA: step 1/1. Functionally, component of the acetyl coenzyme A carboxylase (ACC) complex. First, biotin carboxylase catalyzes the carboxylation of biotin on its carrier protein (BCCP) and then the CO(2) group is transferred by the carboxyltransferase to acetyl-CoA to form malonyl-CoA. In Chlorobium phaeobacteroides (strain BS1), this protein is Acetyl-coenzyme A carboxylase carboxyl transferase subunit alpha.